Consider the following 332-residue polypeptide: Tryptophan--tRNA ligase (332 aa).

Residues 13 to 15 (KPS) and 21 to 22 (GN) contribute to the ATP site. Positions 14 to 22 (PSGDLTLGN) match the 'HIGH' region motif. Residue Asp-137 participates in L-tryptophan binding. ATP is bound by residues 149–151 (GKD), Ile-188, and 197–201 (KMSKS). The 'KMSKS' region signature appears at 197–201 (KMSKS).

It belongs to the class-I aminoacyl-tRNA synthetase family. In terms of assembly, homodimer.

The protein resides in the cytoplasm. The enzyme catalyses tRNA(Trp) + L-tryptophan + ATP = L-tryptophyl-tRNA(Trp) + AMP + diphosphate + H(+). Functionally, catalyzes the attachment of tryptophan to tRNA(Trp). This is Tryptophan--tRNA ligase from Clostridium perfringens (strain 13 / Type A).